We begin with the raw amino-acid sequence, 837 residues long: WW domain-containing protein tag-325 (837 aa).

Over residues Met-1–Thr-11 the composition is skewed to polar residues. Positions Met-1 to Pro-66 are disordered. Low complexity predominate over residues Ser-33–Ser-43. The span at Gln-44–Asn-61 shows a compositional bias: polar residues. Positions Arg-96 to Phe-129 constitute a WW domain. Residues Thr-150–Ser-161 are compositionally biased toward low complexity. Disordered stretches follow at residues Thr-150–Gln-181, Asp-194–Ser-257, Thr-338–Glu-403, Met-548–Pro-574, and Lys-778–Gln-800. Residues Glu-162 to Gln-181 show a composition bias toward basic and acidic residues. A compositionally biased stretch (polar residues) spans Pro-247–Ser-257. The segment covering Arg-371–Glu-403 has biased composition (basic and acidic residues). One can recognise a PH domain in the interval Arg-386–Ala-505. Polar residues predominate over residues Ser-556 to Thr-569. Positions Ser-610 to Asp-827 constitute a Rho-GAP domain. Residues Lys-778–Pro-788 show a composition bias toward basic residues.

The chain is WW domain-containing protein tag-325 (tag-325) from Caenorhabditis elegans.